Reading from the N-terminus, the 486-residue chain is FAD-dependent oxidoreductase domain-containing protein 1 (486 aa).

The chain crosses the membrane as a helical span at residues 66–86 (VVVVGGGVLGLSVAYWLKQLE).

As to quaternary structure, associates with components of the mitochondrial respiratory chain complex I. Requires FAD as cofactor.

It localises to the mitochondrion inner membrane. Its function is as follows. Required for the assembly of the mitochondrial membrane respiratory chain NADH dehydrogenase (Complex I). Involved in mid-late stages of complex I assembly. The chain is FAD-dependent oxidoreductase domain-containing protein 1 (FOXRED1) from Macaca fascicularis (Crab-eating macaque).